Reading from the N-terminus, the 155-residue chain is Ribosome maturation factor RimP (155 aa).

The protein belongs to the RimP family.

It localises to the cytoplasm. Functionally, required for maturation of 30S ribosomal subunits. This chain is Ribosome maturation factor RimP, found in Macrococcus caseolyticus (strain JCSC5402) (Macrococcoides caseolyticum).